A 187-amino-acid polypeptide reads, in one-letter code: UPF0215 protein PAE0952 (187 aa).

This sequence belongs to the UPF0215 family.

This chain is UPF0215 protein PAE0952, found in Pyrobaculum aerophilum (strain ATCC 51768 / DSM 7523 / JCM 9630 / CIP 104966 / NBRC 100827 / IM2).